A 37-amino-acid polypeptide reads, in one-letter code: Large ribosomal subunit protein bL12 (37 aa).

This sequence belongs to the bacterial ribosomal protein bL12 family. Homodimer. Part of the ribosomal stalk of the 50S ribosomal subunit. Forms a multimeric L10(L12)X complex, where L10 forms an elongated spine to which 2 to 4 L12 dimers bind in a sequential fashion. Binds GTP-bound translation factors.

Forms part of the ribosomal stalk which helps the ribosome interact with GTP-bound translation factors. Is thus essential for accurate translation. The polypeptide is Large ribosomal subunit protein bL12 (rplL) (Clostridium pasteurianum).